A 37-amino-acid chain; its full sequence is Large ribosomal subunit protein bL36c (37 aa).

The protein belongs to the bacterial ribosomal protein bL36 family.

The protein localises to the plastid. It is found in the chloroplast. The sequence is that of Large ribosomal subunit protein bL36c from Pleurastrum terricola (Filamentous green alga).